The chain runs to 919 residues: WD repeat-containing protein 47 (919 aa).

The 33-residue stretch at 10–42 folds into the LisH domain; the sequence is KEVEIIKLILDFLNSKKLHISMLALEKESGVIN. Positions 45 to 102 constitute a CTLH domain; that stretch reads FSDDMLFLRQLILDGQWDEVLQFIQPLECMEKFDKKRFRYIILKQKFLEALCVNNAMS. T285 carries the post-translational modification Phosphothreonine. S289, S292, S297, and S312 each carry phosphoserine. A disordered region spans residues 393-421; the sequence is GQSSVSEKEPANGAQNPGPAKQEKNELRD. S422 carries the phosphoserine modification. The tract at residues 500–590 is disordered; it reads LNQQCNGSKG…SLSRSKGEED (91 aa). Residues 517-551 show a composition bias toward polar residues; that stretch reads VTSFTTPPQDSSQRLTHDASNIHTSTPRNPGSTNH. T542 is modified (phosphothreonine). WD repeat units lie at residues 604 to 643, 659 to 698, 706 to 748, 753 to 791, 798 to 837, 840 to 879, and 886 to 918; these read EDTQ…DPSA, HHKG…CNAT, MHDG…GQGL, GHTG…CVRV, GTGS…MVQS, PHSS…TKQL, and EHKD…WTYN.

As to quaternary structure, interacts with MAP1S (via WD repeats).

The protein resides in the cytoplasm. Its subcellular location is the cytoskeleton. In Homo sapiens (Human), this protein is WD repeat-containing protein 47 (WDR47).